The following is a 201-amino-acid chain: Oligoribonuclease (201 aa).

The 164-residue stretch at 20–183 (LVWLDMEMTG…ADIHESIDEL (164 aa)) folds into the Exonuclease domain. Residue Tyr-141 is part of the active site.

Belongs to the oligoribonuclease family.

Its subcellular location is the cytoplasm. Functionally, 3'-to-5' exoribonuclease specific for small oligoribonucleotides. The sequence is that of Oligoribonuclease from Burkholderia mallei (strain NCTC 10229).